The primary structure comprises 370 residues: Putative transposase InsL for insertion sequence element IS186A (370 aa).

It belongs to the transposase 11 family.

In terms of biological role, involved in the transposition of the insertion sequence IS186. The protein is Putative transposase InsL for insertion sequence element IS186A (insL1) of Escherichia coli (strain K12).